The following is a 302-amino-acid chain: N-acetylmuramic acid 6-phosphate etherase (302 aa).

The 164-residue stretch at 58 to 221 (IFERFKKGGR…TTTLMIKLGK (164 aa)) folds into the SIS domain. The Proton donor role is filled by Glu-86. Residue Glu-117 is part of the active site.

The protein belongs to the GCKR-like family. MurNAc-6-P etherase subfamily. In terms of assembly, homodimer.

The catalysed reaction is N-acetyl-D-muramate 6-phosphate + H2O = N-acetyl-D-glucosamine 6-phosphate + (R)-lactate. The protein operates within amino-sugar metabolism; N-acetylmuramate degradation. In terms of biological role, specifically catalyzes the cleavage of the D-lactyl ether substituent of MurNAc 6-phosphate, producing GlcNAc 6-phosphate and D-lactate. In Mycoplasma mycoides subsp. mycoides SC (strain CCUG 32753 / NCTC 10114 / PG1), this protein is N-acetylmuramic acid 6-phosphate etherase.